We begin with the raw amino-acid sequence, 292 residues long: MNVVLSLETWDIDDTLALLFLAHYHQKGKIDLLAVEVDKGPPSQNNYVKYLLQKIHLNVPVFSRNVEEDKSELPEYYYELFEDLKLESQESQRREELLDLLKGKEFKLVVGGSLNLIPFLLENSVFPEEIFVQGGFAGKNITGKTHEKFGDRYFKATFNFNKDVKATLRTFELLKEFRIPTYLISKNLNHTILIKEEDIPQKEPSTKAQELYFEILKKYLRKYRKEKSLHDVYACIAMFKKNLFVWKEVIPVYRKGRKYTEWGSVEAKSNIWITVDGKREEIKDYAVFRKEF.

This is an uncharacterized protein from Aquifex aeolicus (strain VF5).